Reading from the N-terminus, the 309-residue chain is uncharacterized protein (309 aa).

Residues 1 to 16 show a composition bias toward basic residues; it reads MAGNSRRRGAVRKAGT. The segment at 1–70 is disordered; it reads MAGNSRRRGA…AKRTEETETV (70 aa). 3 residues coordinate S-adenosyl-L-methionine: G261, I281, and L290.

It belongs to the class IV-like SAM-binding methyltransferase superfamily. RNA methyltransferase TrmH family.

This is an uncharacterized protein from Mycobacterium avium (strain 104).